We begin with the raw amino-acid sequence, 159 residues long: 2-C-methyl-D-erythritol 2,4-cyclodiphosphate synthase (159 aa).

A divalent metal cation is bound by residues D8 and H10. Residues 8–10 (DVH) and 34–35 (HS) contribute to the 4-CDP-2-C-methyl-D-erythritol 2-phosphate site. Position 42 (H42) interacts with a divalent metal cation. Residues 56–58 (DIG), 61–65 (FPDTD), 100–106 (AQAPKMA), 132–135 (TTSE), F139, and R142 each bind 4-CDP-2-C-methyl-D-erythritol 2-phosphate.

The protein belongs to the IspF family. In terms of assembly, homotrimer. A divalent metal cation serves as cofactor.

The catalysed reaction is 4-CDP-2-C-methyl-D-erythritol 2-phosphate = 2-C-methyl-D-erythritol 2,4-cyclic diphosphate + CMP. The protein operates within isoprenoid biosynthesis; isopentenyl diphosphate biosynthesis via DXP pathway; isopentenyl diphosphate from 1-deoxy-D-xylulose 5-phosphate: step 4/6. Its function is as follows. Involved in the biosynthesis of isopentenyl diphosphate (IPP) and dimethylallyl diphosphate (DMAPP), two major building blocks of isoprenoid compounds. Catalyzes the conversion of 4-diphosphocytidyl-2-C-methyl-D-erythritol 2-phosphate (CDP-ME2P) to 2-C-methyl-D-erythritol 2,4-cyclodiphosphate (ME-CPP) with a corresponding release of cytidine 5-monophosphate (CMP). The polypeptide is 2-C-methyl-D-erythritol 2,4-cyclodiphosphate synthase (Aliivibrio salmonicida (strain LFI1238) (Vibrio salmonicida (strain LFI1238))).